The sequence spans 386 residues: 3-ketosteroid-9-alpha-monooxygenase, oxygenase component (386 aa).

Residues 26–128 enclose the Rieske domain; it reads WHCLGVAKDY…TDVRSGLLFV (103 aa). Cys-67, His-69, Cys-86, and His-89 together coordinate [2Fe-2S] cluster. Fe cation-binding residues include Asn-175, His-181, His-186, and Asp-304.

Homotrimer. The two-component system 3-ketosteroid-9-alpha-monooxygenase is composed of an oxygenase component KshA and a reductase component KshB. The cofactor is [2Fe-2S] cluster. Fe cation serves as cofactor.

It carries out the reaction androsta-1,4-diene-3,17-dione + 2 reduced [2Fe-2S]-[ferredoxin] + O2 + 2 H(+) = 9alpha-hydroxyandrosta-1,4-diene-3,17-dione + 2 oxidized [2Fe-2S]-[ferredoxin] + H2O. The enzyme catalyses androst-4-ene-3,17-dione + NADH + O2 + H(+) = 9alpha-hydroxy-androst-4-ene-3,17-dione + NAD(+) + H2O. The catalysed reaction is 3-oxochol-4-en-22-oate + NADH + O2 + H(+) = 9alpha-hydroxy-3-oxochol-4-en-22-oate + NAD(+) + H2O. It catalyses the reaction 3-oxochola-1,4-dien-22-oate + NADH + O2 + H(+) = 9alpha-hydroxy-3-oxochola-1,4-dien-22-oate + NAD(+) + H2O. It carries out the reaction 3-oxochol-4-en-22-oyl-CoA + NADH + O2 + H(+) = 9alpha-hydroxy-3-oxochol-4-en-22-oyl-CoA + NAD(+) + H2O. The enzyme catalyses 3-oxochola-1,4-dien-22-oyl-CoA + NADH + O2 + H(+) = 9alpha-hydroxy-3-oxochola-1,4-dien-22-oyl-CoA + NAD(+) + H2O. The protein operates within lipid metabolism; steroid biosynthesis. In terms of biological role, involved in the degradation of cholesterol. Catalyzes the introduction of a 9a-hydroxyl moiety into 1,4-androstadiene-3,17-dione (ADD) to yield the 9alpha-hydroxy-1,4-androstadiene-3,17-dione (9OHADD) intermediate which spontaneously form 3-hydroxy-9,10-seconandrost-1,3,5(10)-triene-9,17-dione (HSA) via the meta-cleavage of ring B with concomitant aromatization of ring A. KSH is also able to use 4-androstene-3,17-dione (AD), 3-oxo-23,24-bisnorcholesta-4-en-22-oate (4-BNC), 3-oxo-23,24-bisnorcholesta-1,4-dien-22-oate (1,4-BNC), 3-oxo-23,24-bisnorcholesta-4-en-22-oyl-coenzyme A thioester (4-BNC-CoA) and 3-oxo-23,24-bisnorcholesta-1,4-dien-22-oyl-coenzyme A thioester (1,4-BNC-CoA) as substrates. The polypeptide is 3-ketosteroid-9-alpha-monooxygenase, oxygenase component (kshA) (Mycobacterium tuberculosis (strain ATCC 25618 / H37Rv)).